Reading from the N-terminus, the 191-residue chain is Signal peptidase IB (191 aa).

Over 1-7 (MKKEILE) the chain is Cytoplasmic. A helical membrane pass occupies residues 8–28 (WIISIAVAFVILFIVGKFIVT). The Extracellular segment spans residues 29-191 (PYTIKGESMD…HNFNPENTKN (163 aa)). Catalysis depends on residues Ser-36 and Lys-77.

This sequence belongs to the peptidase S26 family.

It is found in the cell membrane. It catalyses the reaction Cleavage of hydrophobic, N-terminal signal or leader sequences from secreted and periplasmic proteins.. Its function is as follows. Essential for cell viability. This is Signal peptidase IB (spsB) from Staphylococcus aureus (strain COL).